The sequence spans 395 residues: Elongation factor Tu (395 aa).

Positions Lys-10–Glu-204 constitute a tr-type G domain. The tract at residues Gly-19 to Thr-26 is G1. Gly-19–Thr-26 is a GTP binding site. Mg(2+) is bound at residue Thr-26. Positions Gly-60–Ser-64 are G2. The interval Asp-81–Gly-84 is G3. Residues Asp-81–His-85 and Asn-136–Asp-139 each bind GTP. Residues Asn-136–Asp-139 are G4. The interval Ser-174–Leu-176 is G5.

This sequence belongs to the TRAFAC class translation factor GTPase superfamily. Classic translation factor GTPase family. EF-Tu/EF-1A subfamily. Monomer. In terms of processing, phosphorylated on serine and/or threonine residue(s). Dephosphorylated by stp.

It is found in the cytoplasm. It carries out the reaction GTP + H2O = GDP + phosphate + H(+). Functionally, GTP hydrolase that promotes the GTP-dependent binding of aminoacyl-tRNA to the A-site of ribosomes during protein biosynthesis. This Listeria innocua serovar 6a (strain ATCC BAA-680 / CLIP 11262) protein is Elongation factor Tu.